Reading from the N-terminus, the 281-residue chain is Sulfur carrier protein FdhD (281 aa).

Residue cysteine 127 is the Cysteine persulfide intermediate of the active site. 264–269 (FAREGR) serves as a coordination point for Mo-bis(molybdopterin guanine dinucleotide).

It belongs to the FdhD family.

It is found in the cytoplasm. Its function is as follows. Required for formate dehydrogenase (FDH) activity. Acts as a sulfur carrier protein that transfers sulfur from IscS to the molybdenum cofactor prior to its insertion into FDH. This chain is Sulfur carrier protein FdhD, found in Mannheimia succiniciproducens (strain KCTC 0769BP / MBEL55E).